The sequence spans 215 residues: 3-dehydroquinate dehydratase (215 aa).

Residues 30-32 and arginine 62 each bind 3-dehydroquinate; that span reads EVR. The Proton donor/acceptor role is filled by histidine 114. Catalysis depends on lysine 140, which acts as the Schiff-base intermediate with substrate. 2 residues coordinate 3-dehydroquinate: arginine 178 and glutamine 201.

This sequence belongs to the type-I 3-dehydroquinase family. In terms of assembly, homodimer.

The catalysed reaction is 3-dehydroquinate = 3-dehydroshikimate + H2O. It participates in metabolic intermediate biosynthesis; chorismate biosynthesis; chorismate from D-erythrose 4-phosphate and phosphoenolpyruvate: step 3/7. Its function is as follows. Involved in the third step of the chorismate pathway, which leads to the biosynthesis of aromatic amino acids. Catalyzes the cis-dehydration of 3-dehydroquinate (DHQ) and introduces the first double bond of the aromatic ring to yield 3-dehydroshikimate. This is 3-dehydroquinate dehydratase from Methanopyrus kandleri (strain AV19 / DSM 6324 / JCM 9639 / NBRC 100938).